We begin with the raw amino-acid sequence, 186 residues long: Putative manganese efflux pump MntP (186 aa).

Transmembrane regions (helical) follow at residues 1–21, 41–61, 62–82, 105–127, 139–159, and 163–183; these read MSFL…FAVS, VFFG…GSAV, SGFV…FIGG, LFLL…AFLG, CVTF…GHFF, and VEIL…AEHM.

This sequence belongs to the MntP (TC 9.B.29) family.

It localises to the cell membrane. Functionally, probably functions as a manganese efflux pump. The protein is Putative manganese efflux pump MntP of Methanosarcina mazei (strain ATCC BAA-159 / DSM 3647 / Goe1 / Go1 / JCM 11833 / OCM 88) (Methanosarcina frisia).